The following is a 447-amino-acid chain: Serine/threonine-protein kinase NLK2 (447 aa).

The region spanning 60–349 is the Protein kinase domain; sequence PEPDRPIGYG…AKDALAHPYL (290 aa). ATP is bound by residues 66–74 and lysine 89; that span reads IGYGAFGVV. The active-site Proton acceptor is the aspartate 186.

Belongs to the protein kinase superfamily. CMGC Ser/Thr protein kinase family. MAP kinase subfamily. Interacts with sox11, hmgxb4/hmg2l1, rnf138/narf, stat3.1 and mef2a. Mg(2+) is required as a cofactor. As to expression, expressed widely in the ectoderm during early gastrula stage when neural induction is taking place. Expressed in the head region of neurula stage embryos. At the end of neurulation, expression becomes localized to the nervous system, and is restricted to the central nervous system, eye and head neural crest cells by the early tadpole stages.

Its subcellular location is the nucleus. It localises to the cytoplasm. The enzyme catalyses L-seryl-[protein] + ATP = O-phospho-L-seryl-[protein] + ADP + H(+). It catalyses the reaction L-threonyl-[protein] + ATP = O-phospho-L-threonyl-[protein] + ADP + H(+). Activated by tyrosine and threonine phosphorylation. In terms of biological role, negatively regulates Wnt/beta-catenin-signaling during development. Plays a role together with sox11 in neural induction during early embryogenesis. Involved in TGFbeta-mediated mesoderm induction in early embryos, acting downstream of map3k7/tak1 to phosphorylate stat3.1. Augments the rnf138/narf-directed ubiquitination and degradation of tcf/lef by enhancing the association of rnf138/narf and tcf/lef. Phosphorylates mef2a to play a role in anterior neural development, including eye formation. This Xenopus laevis (African clawed frog) protein is Serine/threonine-protein kinase NLK2 (nlk.2).